Consider the following 160-residue polypeptide: Cytochrome b6-f complex subunit 4 (160 aa).

3 consecutive transmembrane segments (helical) span residues 36-56, 95-115, and 131-151; these read LLYM…GLAV, LLGI…PFIE, and AVFL…ALPI.

It belongs to the cytochrome b family. PetD subfamily. The 4 large subunits of the cytochrome b6-f complex are cytochrome b6, subunit IV (17 kDa polypeptide, PetD), cytochrome f and the Rieske protein, while the 4 small subunits are PetG, PetL, PetM and PetN. The complex functions as a dimer.

The protein localises to the cellular thylakoid membrane. Functionally, component of the cytochrome b6-f complex, which mediates electron transfer between photosystem II (PSII) and photosystem I (PSI), cyclic electron flow around PSI, and state transitions. In Synechococcus elongatus (strain ATCC 33912 / PCC 7942 / FACHB-805) (Anacystis nidulans R2), this protein is Cytochrome b6-f complex subunit 4.